The chain runs to 234 residues: Small ribosomal subunit protein uS2c (234 aa).

The protein belongs to the universal ribosomal protein uS2 family.

It localises to the plastid. The protein resides in the chloroplast. This Pinus koraiensis (Korean pine) protein is Small ribosomal subunit protein uS2c (rps2).